The sequence spans 427 residues: Glutamate-1-semialdehyde 2,1-aminomutase (427 aa).

An N6-(pyridoxal phosphate)lysine modification is found at K265.

The protein belongs to the class-III pyridoxal-phosphate-dependent aminotransferase family. HemL subfamily. Homodimer. It depends on pyridoxal 5'-phosphate as a cofactor.

The protein resides in the cytoplasm. It catalyses the reaction (S)-4-amino-5-oxopentanoate = 5-aminolevulinate. Its pathway is porphyrin-containing compound metabolism; protoporphyrin-IX biosynthesis; 5-aminolevulinate from L-glutamyl-tRNA(Glu): step 2/2. The polypeptide is Glutamate-1-semialdehyde 2,1-aminomutase (Burkholderia ambifaria (strain MC40-6)).